A 73-amino-acid chain; its full sequence is RNA-binding protein Hfq (73 aa).

One can recognise a Sm domain in the interval 8 to 68 (DQFLNQIRKD…ISTFAPQKNV (61 aa)).

Belongs to the Hfq family. Homohexamer.

RNA chaperone that binds small regulatory RNA (sRNAs) and mRNAs to facilitate mRNA translational regulation in response to envelope stress, environmental stress and changes in metabolite concentrations. Also binds with high specificity to tRNAs. This chain is RNA-binding protein Hfq, found in Bacillus pumilus (strain SAFR-032).